Consider the following 1438-residue polypeptide: DNA polymerase III PolC-type (1438 aa).

The region spanning 422 to 578 is the Exonuclease domain; the sequence is YVVFDVETTG…YDTEATAYIF (157 aa).

It belongs to the DNA polymerase type-C family. PolC subfamily.

The protein localises to the cytoplasm. It catalyses the reaction DNA(n) + a 2'-deoxyribonucleoside 5'-triphosphate = DNA(n+1) + diphosphate. Its function is as follows. Required for replicative DNA synthesis. This DNA polymerase also exhibits 3' to 5' exonuclease activity. The protein is DNA polymerase III PolC-type of Staphylococcus epidermidis (strain ATCC 35984 / DSM 28319 / BCRC 17069 / CCUG 31568 / BM 3577 / RP62A).